The following is a 159-amino-acid chain: Aspartate carbamoyltransferase regulatory chain (159 aa).

Cys-113, Cys-118, Cys-143, and Cys-146 together coordinate Zn(2+).

Belongs to the PyrI family. In terms of assembly, contains catalytic and regulatory chains. The cofactor is Zn(2+).

In terms of biological role, involved in allosteric regulation of aspartate carbamoyltransferase. This is Aspartate carbamoyltransferase regulatory chain from Methanococcoides burtonii (strain DSM 6242 / NBRC 107633 / OCM 468 / ACE-M).